Here is a 112-residue protein sequence, read N- to C-terminus: Hydrogenase maturation factor HypA (112 aa).

A Ni(2+)-binding site is contributed by H2. Residues C72, C75, C88, and C91 each coordinate Zn(2+).

The protein belongs to the HypA/HybF family.

In terms of biological role, involved in the maturation of [NiFe] hydrogenases. Required for nickel insertion into the metal center of the hydrogenase. This Francisella philomiragia subsp. philomiragia (strain ATCC 25017 / CCUG 19701 / FSC 153 / O#319-036) protein is Hydrogenase maturation factor HypA.